Consider the following 113-residue polypeptide: P antigen family member 3 (113 aa).

Residues 1–12 (MSGHQRTRSRSR) are compositionally biased toward basic residues. Disordered stretches follow at residues 1–61 (MSGH…EGAL) and 78–113 (SKTG…QPSV).

Belongs to the GAGE family.

This is P antigen family member 3 (PAGE3) from Homo sapiens (Human).